A 68-amino-acid polypeptide reads, in one-letter code: Alpha/kappa-conotoxin-like pl14.2 (68 aa).

An N-terminal signal peptide occupies residues Met1–Pro27. Positions Ala28 to Arg39 are excised as a propeptide. Disulfide bonds link Cys46/Cys61 and Cys50/Cys63. Arg64 carries the post-translational modification Arginine amide. Residues Gly65–Asp68 constitute a propeptide that is removed on maturation.

It belongs to the conotoxin J superfamily. As to expression, expressed by the venom duct.

It is found in the secreted. Its function is as follows. Highly inhibits both nicotinic acetylcholine receptors (neuronal (alpha-3/beta-4) and muscular (alpha-1/beta-1/epsilon/delta) subtypes) and the voltage-gated potassium channel Kv1.6/KCNA6 subtype. This chain is Alpha/kappa-conotoxin-like pl14.2, found in Conus planorbis (Planorbis cone).